The sequence spans 53 residues: Minor histocompatibility protein HMSD variant form (53 aa).

ACC-6 forms a complex with MHC HLA-B*4403. As to expression, highly expressed in dendritic cells and primary leukemia cells, especially those of myeloid lineage. ACC-6 expression is limited to cells of the hematopoietic lineage.

This splice variant of HMSD is the precursor of the histocompatibility antigen ACC-6. More generally, minor histocompatibility antigens (mHags) refer to immunogenic peptide which, when complexed with MHC, can generate an immune response after recognition by specific T-cells. The peptides are derived from polymorphic intracellular proteins, which are cleaved by normal pathways of antigen processing. The binding of these peptides to MHC class I or class II molecules and its expression on the cell surface can stimulate T-cell responses and thereby trigger graft rejection or graft-versus-host disease (GVHD) after hematopoietic stem cell transplantation from HLA-identical sibling donor. GVHD is a frequent complication after bone marrow transplantation (BMT), due to mismatch of minor histocompatibility antigen in HLA-matched sibling marrow transplants. However, associated with GVHD, a favorable graft-versus-leukemia (GVL) can be induced by donor-recipient disparities in mHags. ACC-6 is presented to the cell surface by MHC HLA-B*4403. This complex specifically elicits donor-cytotoxic T-lymphocyte (CTL) reactivity against hematologic malignancies after treatment by HLA-identical allogenic BMT. It induces cell recognition and lysis by CTL. Immunogenicity of most autosomal mHags results from single-nucleotide polymorphisms that cause amino-acid substitutions within epitopes, leading to the differential recognition of peptides between donor and recipient. This is Minor histocompatibility protein HMSD variant form (HMSD) from Homo sapiens (Human).